A 99-amino-acid chain; its full sequence is Small ribosomal subunit protein uS14m (99 aa).

The protein belongs to the universal ribosomal protein uS14 family.

The protein resides in the mitochondrion. In Prototheca wickerhamii, this protein is Small ribosomal subunit protein uS14m (RPS14).